Here is a 383-residue protein sequence, read N- to C-terminus: MLASYASDPLKSRGRLYREIPTSYRNEFERDRDRIIHTNAFRRLQYKTQVFINHEGDHYRNRLTHSLEVSTVARSIANTLNLSSDLAETIALAHDLGHTPFGHAGERSLNECMKEHNGFSHNAQSLKILTLLEKRYAAYRGVNLTWEVLEGIVKHNGPISGEVNEYIEEYNSQNDLELNTYASAEAQIAALADDISYISHDLEDSIGAKIIDFNNLAELKYIDQHVFELKSKYKNISSSCLIYEVVRKLMHELITDLLWQTKTNINKEKITHIDEIRNLNYQIVDFTEKTNERIKEIKKFLHERVYKSNRITAISLKCTKIVQGLFKVYMEDVNLLPVNWKIQIDSNNPNSKARIIADYIAGMTDRFAIQEYNQLCSLNFNNI.

The 137-residue stretch at 62–198 (RLTHSLEVST…AALADDISYI (137 aa)) folds into the HD domain.

Belongs to the dGTPase family. Type 2 subfamily.

The sequence is that of Deoxyguanosinetriphosphate triphosphohydrolase-like protein from Rickettsia bellii (strain RML369-C).